The following is a 353-amino-acid chain: MIQLWGDSRLRSKNDTILKAIKGESTSHTPVWFMRQAGRSQPEYRKLKEKYSLFEITHQPELCAYVTHLPVDNYQTDAAVLYKDIMTPLKPIGVDVEIKSGIGPVISNPIQTVKDVERLSQIDPKRDVPYVLDTIKLLTEEKLNVPLIGFTGAPFTLASYMIEGGPSKNYNFTKAMMYRDEETWFALMNHLVDISIDYVVAQVEAGAEIIQIFDSWVGALNVKDYRYYIKPAMNKLISGIKAYYDVPIILFGVGASHLINEWNDLPIDVLGLDWRTTIKQADKMGVNKAIQGNLDPSILLAPWDVIESRLKDILNQGLNRGKYIFNLGHGVFPEVKPETLRKVTEFVHNYTAK.

Residues Arg35–Arg39, Phe54, Asp84, Tyr160, Ser215, and His329 each bind substrate.

It belongs to the uroporphyrinogen decarboxylase family. As to quaternary structure, homodimer.

The protein localises to the cytoplasm. The enzyme catalyses uroporphyrinogen III + 4 H(+) = coproporphyrinogen III + 4 CO2. It participates in porphyrin-containing compound metabolism; protoporphyrin-IX biosynthesis; coproporphyrinogen-III from 5-aminolevulinate: step 4/4. Functionally, catalyzes the decarboxylation of four acetate groups of uroporphyrinogen-III to yield coproporphyrinogen-III. This is Uroporphyrinogen decarboxylase from Staphylococcus epidermidis (strain ATCC 12228 / FDA PCI 1200).